The chain runs to 470 residues: MGKPWLRALQLLLLLGASWARAGAPRCTYTFVLPPQKFTGAVCWSGPASTRATPEAANASELAALRMRVGRHEELLRELQRLAAADGAVAGEVRALRKESRGLSARLGQLRAQLQHEAGPGAGPGADLGAEPAAALALLGERVLNASAEAQRAAARFHQLDVKFRELAQLVTQQSSLIARLERLCPGGAGGQQQVLPPPPLVPVVPVRLVGSTSDTSRMLDPAPEPQRDQTQRQQEPMASPMPAGHPAVPTKPVGPWQDCAEARQAGHEQSGVYELRVGRHVVSVWCEQQLEGGGWTVIQRRQDGSVNFFTTWQHYKAGFGRPDGEYWLGLEPVYQLTSRGDHELLVLLEDWGGRGARAHYDGFSLEPESDHYRLRLGQYHGDAGDSLSWHNDKPFSTVDRDRDSYSGNCALYQRGGWWYHACAHSNLNGVWHHGGHYRSRYQDGVYWAEFRGGAYSLRKAAMLIRPLKL.

The first 20 residues, 1–20, serve as a signal peptide directing secretion; that stretch reads MGKPWLRALQLLLLLGASWA. N58 carries an N-linked (GlcNAc...) asparagine glycan. The stretch at 59–116 forms a coiled coil; it reads ASELAALRMRVGRHEELLRELQRLAAADGAVAGEVRALRKESRGLSARLGQLRAQLQH. The N-linked (GlcNAc...) (complex) asparagine glycan is linked to N145. Positions 214 to 249 are disordered; sequence SDTSRMLDPAPEPQRDQTQRQQEPMASPMPAGHPAV. The Fibrinogen C-terminal domain occupies 251 to 469; it reads TKPVGPWQDC…KAAMLIRPLK (219 aa). Cystine bridges form between C260-C287 and C410-C423.

The protein localises to the secreted. Functionally, may play a role in the wound healing process. May promote epidermal proliferation, remodeling and regeneration. May promote the chemotactic activity of endothelial cells and induce neovascularization. May counteract high-fat diet-induced obesity and related insulin resistance through increased energy expenditure. The protein is Angiopoietin-related protein 6 (ANGPTL6) of Homo sapiens (Human).